Reading from the N-terminus, the 692-residue chain is Glycine--tRNA ligase beta subunit (692 aa).

The protein belongs to the class-II aminoacyl-tRNA synthetase family. As to quaternary structure, tetramer of two alpha and two beta subunits.

It is found in the cytoplasm. It catalyses the reaction tRNA(Gly) + glycine + ATP = glycyl-tRNA(Gly) + AMP + diphosphate. This Hahella chejuensis (strain KCTC 2396) protein is Glycine--tRNA ligase beta subunit.